The sequence spans 154 residues: Protein disulfide-isomerase LQY1, chloroplastic (154 aa).

Residues 1–43 constitute a chloroplast transit peptide; that stretch reads MPVSAPSPPRLHSPFIHCPINFTPSSFSARNLRSPSTSYPRIK. The chain crosses the membrane as a helical span at residues 51–71; that stretch reads VVAISVGVASVALGIGIPVFY. The segment at 77–147 adopts a CR-type zinc-finger fold; the sequence is NAAKRENTQP…SGVQPRYLDR (71 aa). Positions 87, 90, 98, 101, 121, 124, 132, and 135 each coordinate Zn(2+).

This sequence belongs to the BSD2 chaperone family. Interacts with the photosystem II core subunits. Interacts with HHL1. It depends on Zn(2+) as a cofactor.

It localises to the plastid. Its subcellular location is the chloroplast thylakoid membrane. The catalysed reaction is Catalyzes the rearrangement of -S-S- bonds in proteins.. Its function is as follows. Protein disulfide-isomerase probably involved upon formation of a complex with HHL1 in maintaining photosystem II (PSII) activity under high light by regulating repair and reassembly of PSII complexes. The protein is Protein disulfide-isomerase LQY1, chloroplastic of Arabidopsis thaliana (Mouse-ear cress).